The primary structure comprises 292 residues: Quinolinate synthase (292 aa).

Positions 8 and 25 each coordinate iminosuccinate. Cys-70 contacts [4Fe-4S] cluster. Iminosuccinate contacts are provided by residues 96-98 (YVN) and Ser-113. Residue Cys-158 participates in [4Fe-4S] cluster binding. Residues 184-186 (HPE) and Thr-201 each bind iminosuccinate. Cys-244 contributes to the [4Fe-4S] cluster binding site.

It belongs to the quinolinate synthase family. Type 2 subfamily. The cofactor is [4Fe-4S] cluster.

It localises to the cytoplasm. The catalysed reaction is iminosuccinate + dihydroxyacetone phosphate = quinolinate + phosphate + 2 H2O + H(+). It participates in cofactor biosynthesis; NAD(+) biosynthesis; quinolinate from iminoaspartate: step 1/1. Functionally, catalyzes the condensation of iminoaspartate with dihydroxyacetone phosphate to form quinolinate. This Methanopyrus kandleri (strain AV19 / DSM 6324 / JCM 9639 / NBRC 100938) protein is Quinolinate synthase (nadA).